The sequence spans 224 residues: uncharacterized protein (224 aa).

3 N-linked (GlcNAc...) asparagine glycosylation sites follow: Asn-10, Asn-70, and Asn-74.

It localises to the endoplasmic reticulum. This is an uncharacterized protein from Saccharomyces cerevisiae (strain ATCC 204508 / S288c) (Baker's yeast).